An 89-amino-acid polypeptide reads, in one-letter code: uncharacterized protein (89 aa).

2 stretches are compositionally biased toward basic residues: residues 1–17 (MPPH…HGHH) and 65–89 (HHGH…HGHH). Disordered stretches follow at residues 1–25 (MPPH…ITPV) and 60–89 (LETG…HGHH).

This is an uncharacterized protein from Dictyostelium discoideum (Social amoeba).